Consider the following 832-residue polypeptide: Mechanosensitive cation channel TMEM63B (832 aa).

Residues 1–40 (MLPFLLATLGTAALNSSNPKDYCYSARIRSTVLQGLPFGG) are Extracellular-facing. The helical transmembrane segment at 41–65 (VPTVLALDFMCFLALLFLFSILRKV) threads the bilayer. Residue Cys51 is the site of S-palmitoyl cysteine attachment. The Cytoplasmic portion of the chain corresponds to 66–145 (AWDYGRLALV…KDDEIRDKCG (80 aa)). Positions 86–88 (RER) match the Mediates endoplasmic reticulum retention motif. Phosphoserine occurs at positions 111, 113, 114, and 115. The S-palmitoyl cysteine moiety is linked to residue Cys126. Residues 146 to 178 (GDAVHYLSFQRHIIGLLVVVGVLSVGIVLPVNF) form a helical membrane-spanning segment. Residues 179–202 (SGDLLENNAYSFGRTTIANLKSGN) lie on the Extracellular side of the membrane. Residues 203–227 (NLLWLHTSFAFLYLLLTVYSMRRHT) traverse the membrane as a helical segment. Topologically, residues 228-427 (SKMRYKEDDL…IYWEHLSIRG (200 aa)) are cytoplasmic. Residues 231–426 (RYKEDDLVKR…NIYWEHLSIR (196 aa)) form an intracellular linker IL2; confers mechanosensitivity region. S-palmitoyl cysteine attachment occurs at residues Cys382 and Cys398. Residues 428–457 (FIWWLRCLVINVVLFILLFFLTTPAIIITT) traverse the membrane as a helical segment. The Extracellular portion of the chain corresponds to 458–472 (MDKFNVTKPVEYLNN). Residue Asn462 is glycosylated (N-linked (GlcNAc...) asparagine). The chain crosses the membrane as a helical span at residues 473–502 (PIITQFFPTLLLWCFSALLPTIVYYSAFFE). Residues 503-506 (AHWT) lie on the Cytoplasmic side of the membrane. A helical transmembrane segment spans residues 507 to 543 (RSGENRTTMHKCYTFLIFMVLLLPSLGLSSLDLFFRW). Over 544 to 566 (LFDKKFLAEAAIRFECVFLPDNG) the chain is Extracellular. The helical transmembrane segment at 567–599 (AFFVNYVIASAFIGNAMDLLRIPGLLMYMIRLC) threads the bilayer. The interval 567–599 (AFFVNYVIASAFIGNAMDLLRIPGLLMYMIRLC) is gating helix. Residues 600-619 (LARSAAERRNVKRHQAYEFQ) are Cytoplasmic-facing. The chain crosses the membrane as a helical span at residues 620–638 (FGAAYAWMMCVFTVVMTYS). Residues 639–641 (ITC) lie on the Extracellular side of the membrane. Residues 642 to 666 (PIIVPFGLMYMLLKHLVDRYNLYYA) form a helical membrane-spanning segment. Residues 667-673 (YLPAKLD) are Cytoplasmic-facing. The chain crosses the membrane as a helical span at residues 674–702 (KKIHSGAVNQVVAAPILCLFWLLFFSTMR). At 703–707 (TGFLA) the chain is on the extracellular side. A helical membrane pass occupies residues 708 to 728 (PTSMFTFVVLVITIVICLCHV). Residues Cys726 and Cys729 are each lipidated (S-palmitoyl cysteine). At 729 to 832 (CFGHFKYLSA…DSLIENEIHQ (104 aa)) the chain is on the cytoplasmic side. 2 disordered regions span residues 748-767 (TDAV…AVPK) and 776-818 (LQDS…DTDF). Positions 749–758 (DAVSSRSNGR) are enriched in polar residues. The segment covering 789–801 (PGSSGDEPPSSSS) has biased composition (low complexity).

It belongs to the CSC1 (TC 1.A.17) family. In terms of assembly, monomer. Interacts with SLC19A2; interaction is required for the phospholipid scramblase activity. Palmitoylation is required for localization to the plasma membrane and stability. Expressed in cochlear hair cells (at protein level). Highly expressed in the subfornical organ of the brain. Expressed in small intestine. As to expression, brain-specific.

It is found in the cell membrane. Its subcellular location is the endoplasmic reticulum membrane. It localises to the lysosome membrane. The protein localises to the early endosome membrane. The enzyme catalyses Ca(2+)(in) = Ca(2+)(out). The catalysed reaction is Mg(2+)(in) = Mg(2+)(out). It carries out the reaction K(+)(in) = K(+)(out). It catalyses the reaction Na(+)(in) = Na(+)(out). The enzyme catalyses Cs(+)(in) = Cs(+)(out). The catalysed reaction is a 1,2-diacyl-sn-glycero-3-phosphocholine(in) = a 1,2-diacyl-sn-glycero-3-phosphocholine(out). It carries out the reaction a sphingomyelin(in) = a sphingomyelin(out). In terms of biological role, mechanosensitive cation channel with low conductance and high activation threshold. Osmosensitive cation channel preferentially activated by hypotonic stress. Also acts as a phospholipid scramblase in response to changes in membrane structure: upon changes in membrane curvature and thickness, alters its conformation and translocates phospholipids, such as phosphatidylcholine and sphingomyelin, thereby controlling plasma membrane lipid distribution. Forms a heterodimer with SLC19A2, which mediates phospholipid scramblase activity following Ca(2+) stimulation. Expressed in excitatory neurons of the subfornical organ and functions as a thirst receptor that mediates neuronal response to hyperosmolality to drive thirst and drinking behavior. Facilitates intestinal motility by promoting proliferation of intestinal stem cells. Essential for the baby's first breath and respiration throughout life. Upon lung inflation conducts cation currents in alveolar type 1 and 2 cells triggering lamellar body exocytosis and surfactant secretion into airspace. Acts as an osmosensor in cochlear outer hair cells (OHCs) where it mediates calcium influx and regulatory volume decrease response. Required for the maintenance of OHC morphology, OHC survival and normal hearing. Functionally, brain-specific osmosensitive calcium channel isoform. The polypeptide is Mechanosensitive cation channel TMEM63B (Mus musculus (Mouse)).